Reading from the N-terminus, the 119-residue chain is Large ribosomal subunit protein bL20 (119 aa).

The protein belongs to the bacterial ribosomal protein bL20 family.

In terms of biological role, binds directly to 23S ribosomal RNA and is necessary for the in vitro assembly process of the 50S ribosomal subunit. It is not involved in the protein synthesizing functions of that subunit. In Stenotrophomonas maltophilia (strain R551-3), this protein is Large ribosomal subunit protein bL20.